A 99-amino-acid polypeptide reads, in one-letter code: Large ribosomal subunit protein uL23 (99 aa).

It belongs to the universal ribosomal protein uL23 family. In terms of assembly, part of the 50S ribosomal subunit. Contacts protein L29, and trigger factor when it is bound to the ribosome.

In terms of biological role, one of the early assembly proteins it binds 23S rRNA. One of the proteins that surrounds the polypeptide exit tunnel on the outside of the ribosome. Forms the main docking site for trigger factor binding to the ribosome. This is Large ribosomal subunit protein uL23 from Shewanella woodyi (strain ATCC 51908 / MS32).